We begin with the raw amino-acid sequence, 248 residues long: UPF0246 protein MYPE6270 (248 aa).

It belongs to the UPF0246 family.

The protein is UPF0246 protein MYPE6270 of Malacoplasma penetrans (strain HF-2) (Mycoplasma penetrans).